A 598-amino-acid chain; its full sequence is Elongation factor 4 (598 aa).

The region spanning 2 to 184 is the tr-type G domain; it reads KQIRNFSIIA…RLVKEIPAPE (183 aa). GTP-binding positions include 14 to 19 and 131 to 134; these read DHGKST and NKID.

This sequence belongs to the TRAFAC class translation factor GTPase superfamily. Classic translation factor GTPase family. LepA subfamily.

It is found in the cell inner membrane. It catalyses the reaction GTP + H2O = GDP + phosphate + H(+). In terms of biological role, required for accurate and efficient protein synthesis under certain stress conditions. May act as a fidelity factor of the translation reaction, by catalyzing a one-codon backward translocation of tRNAs on improperly translocated ribosomes. Back-translocation proceeds from a post-translocation (POST) complex to a pre-translocation (PRE) complex, thus giving elongation factor G a second chance to translocate the tRNAs correctly. Binds to ribosomes in a GTP-dependent manner. In Photorhabdus laumondii subsp. laumondii (strain DSM 15139 / CIP 105565 / TT01) (Photorhabdus luminescens subsp. laumondii), this protein is Elongation factor 4.